Here is a 110-residue protein sequence, read N- to C-terminus: UPF0339 protein PA0329 (110 aa).

Tandem repeats lie at residues 10–58 (AKDG…AFEV) and 61–109 (ANNG…LSDE). The segment at 91–110 (EAGVQSVKRATPEAGLSDES) is disordered.

Belongs to the UPF0339 family. Duplicated subfamily.

The chain is UPF0339 protein PA0329 from Pseudomonas aeruginosa (strain ATCC 15692 / DSM 22644 / CIP 104116 / JCM 14847 / LMG 12228 / 1C / PRS 101 / PAO1).